The chain runs to 347 residues: NADH-ubiquinone oxidoreductase chain 2 (347 aa).

A run of 11 helical transmembrane segments spans residues 3–23, 25–45, 59–79, 96–116, 122–142, 149–169, 178–198, 201–221, 237–257, 274–294, and 323–343; these read PPIL…VMTS, HWML…PILM, YFLT…INLL, ILMT…FWVP, ISLS…LSVL, INPN…GWGG, IMAY…LYNP, MFLN…LFMI, APLI…LPPL, EMII…YFYM, and MIFL…TPMI.

The protein belongs to the complex I subunit 2 family. As to quaternary structure, core subunit of respiratory chain NADH dehydrogenase (Complex I) which is composed of 45 different subunits. Interacts with TMEM242.

The protein localises to the mitochondrion inner membrane. The enzyme catalyses a ubiquinone + NADH + 5 H(+)(in) = a ubiquinol + NAD(+) + 4 H(+)(out). Its function is as follows. Core subunit of the mitochondrial membrane respiratory chain NADH dehydrogenase (Complex I) which catalyzes electron transfer from NADH through the respiratory chain, using ubiquinone as an electron acceptor. Essential for the catalytic activity and assembly of complex I. The chain is NADH-ubiquinone oxidoreductase chain 2 from Civettictis civetta (African civet).